The chain runs to 977 residues: Macrophage colony-stimulating factor 1 receptor (977 aa).

Positions 1–18 (MFFALLFLIGILLGQVQG) are cleaved as a signal peptide. At 19–519 (WSEPRIRLSS…MEVSDQIFTS (501 aa)) the chain is on the extracellular side. Ig-like C2-type domains lie at 22–109 (PRIR…VHVF), 120–198 (PSTS…EKVS), 213–305 (PYVY…TQLL), 316–407 (PKLS…ASIT), and 408–513 (FDIK…MEVS). The cysteines at positions 48 and 92 are disulfide-linked. N98, N101, N154, N163, N244, N286, N298, N361, N424, and N455 each carry an N-linked (GlcNAc...) asparagine glycan. Disulfide bonds link C138/C187 and C234/C289. C430 and C495 are disulfide-bonded. Residues 520–540 (AMCGSTVAMVVLGLLLIFMIY) form a helical membrane-spanning segment. At 541–977 (KYKQKPRYEI…LMKPNNYQFC (437 aa)) the chain is on the cytoplasmic side. The segment at 544–576 (QKPRYEIRWKIIEATNGNNYTFIDPTQLPYNEK) is regulatory juxtamembrane domain. Position 563 is a phosphotyrosine; by autocatalysis (Y563). The Protein kinase domain maps to 584 to 917 (LKLGKTLGAG…KISQMIQRML (334 aa)). ATP is bound by residues 590-598 (LGAGAFGKV) and K618. Phosphotyrosine; by autocatalysis occurs at positions 701 and 725. D781 (proton acceptor) is an active-site residue. The segment at 799-821 (DFGLARDIMNDSNYVVKGNARLP) is activation loop. Residues Y812 and Y929 each carry the phosphotyrosine; by autocatalysis modification. The interval 919-977 (ETSEQQDTQEYKNIPTEAEAEQQLESCDPVKHEDESFETSCDQEEEDQPLMKPNNYQFC) is disordered. Positions 953–966 (ESFETSCDQEEEDQ) are enriched in acidic residues. Y974 carries the phosphotyrosine; by autocatalysis modification.

It belongs to the protein kinase superfamily. Tyr protein kinase family. CSF-1/PDGF receptor subfamily. In terms of assembly, monomer. Homodimer. Interacts with CSF1. Autophosphorylated in response to CSF1 binding. autophosphorylation, leading to its degradation. Post-translationally, ubiquitinated. Becomes rapidly polyubiquitinated after autophosphorylation, leading to its degradation.

It is found in the cell membrane. It carries out the reaction L-tyrosyl-[protein] + ATP = O-phospho-L-tyrosyl-[protein] + ADP + H(+). Present in an inactive conformation in the absence of bound ligand. CSF1 binding leads to dimerization and activation by autophosphorylation on tyrosine residues. Functionally, tyrosine-protein kinase that acts as a cell-surface receptor for CSF1 and plays an essential role in the regulation of survival, proliferation and differentiation of hematopoietic precursor cells, especially mononuclear phagocytes, such as macrophages and monocytes. Plays an important role in innate immunity and in inflammatory processes. Plays an important role in the regulation of osteoclast proliferation and differentiation, the regulation of bone resorption, and is required for normal bone development. Promotes reorganization of the actin cytoskeleton, regulates formation of membrane ruffles, cell adhesion and cell migration. Activates several signaling pathways in response to ligand binding. In Danio rerio (Zebrafish), this protein is Macrophage colony-stimulating factor 1 receptor (csf1r).